A 352-amino-acid chain; its full sequence is Phosphate acyltransferase (352 aa).

Over residues 328–339 (ESFPGDAREREG) the composition is skewed to basic and acidic residues. The interval 328–352 (ESFPGDAREREGAQAPDAGTERVAS) is disordered.

This sequence belongs to the PlsX family. In terms of assembly, homodimer. Probably interacts with PlsY.

The protein localises to the cytoplasm. It catalyses the reaction a fatty acyl-[ACP] + phosphate = an acyl phosphate + holo-[ACP]. It participates in lipid metabolism; phospholipid metabolism. Its function is as follows. Catalyzes the reversible formation of acyl-phosphate (acyl-PO(4)) from acyl-[acyl-carrier-protein] (acyl-ACP). This enzyme utilizes acyl-ACP as fatty acyl donor, but not acyl-CoA. This is Phosphate acyltransferase from Geobacter sp. (strain M21).